A 760-amino-acid chain; its full sequence is 5-methyltetrahydropteroyltriglutamate--homocysteine methyltransferase (760 aa).

Residues 17–20 (RELK) and K118 each bind 5-methyltetrahydropteroyltri-L-glutamate. Residues 434–436 (IGS) and E487 each bind L-homocysteine. L-methionine contacts are provided by residues 434–436 (IGS) and E487. 5-methyltetrahydropteroyltri-L-glutamate-binding positions include 518–519 (RC) and W564. Residue D602 coordinates L-homocysteine. An L-methionine-binding site is contributed by D602. E608 provides a ligand contact to 5-methyltetrahydropteroyltri-L-glutamate. 3 residues coordinate Zn(2+): H644, C646, and E668. The Proton donor role is filled by H697. C729 contributes to the Zn(2+) binding site.

It belongs to the vitamin-B12 independent methionine synthase family. It depends on Zn(2+) as a cofactor.

The catalysed reaction is 5-methyltetrahydropteroyltri-L-glutamate + L-homocysteine = tetrahydropteroyltri-L-glutamate + L-methionine. It functions in the pathway amino-acid biosynthesis; L-methionine biosynthesis via de novo pathway; L-methionine from L-homocysteine (MetE route): step 1/1. Functionally, catalyzes the transfer of a methyl group from 5-methyltetrahydrofolate to homocysteine resulting in methionine formation. The sequence is that of 5-methyltetrahydropteroyltriglutamate--homocysteine methyltransferase from Buchnera aphidicola subsp. Cinara cedri (strain Cc).